A 250-amino-acid polypeptide reads, in one-letter code: ATP synthase subunit a (250 aa).

Transmembrane regions (helical) follow at residues 27–47, 83–103, 129–149, 191–211, and 219–239; these read TDTVLSTAIAALIVLALAFYL, IAPFVLPLAVTIFVFILISNW, INYVLALALFVFVCYHAAGIW, IFAGGILVALIALFPPYIMWA, and FDLFVGAIQAFIFALLTILYF.

It belongs to the ATPase A chain family. In terms of assembly, F-type ATPases have 2 components, CF(1) - the catalytic core - and CF(0) - the membrane proton channel. CF(1) has five subunits: alpha(3), beta(3), gamma(1), delta(1), epsilon(1). CF(0) has three main subunits: a(1), b(2) and c(9-12). The alpha and beta chains form an alternating ring which encloses part of the gamma chain. CF(1) is attached to CF(0) by a central stalk formed by the gamma and epsilon chains, while a peripheral stalk is formed by the delta and b chains.

The protein resides in the cell membrane. Its function is as follows. Key component of the proton channel; it plays a direct role in the translocation of protons across the membrane. The polypeptide is ATP synthase subunit a (Mycobacterium marinum (strain ATCC BAA-535 / M)).